Reading from the N-terminus, the 293-residue chain is Elongation factor Ts (293 aa).

Residues 80–83 (TDFV) form an involved in Mg(2+) ion dislocation from EF-Tu region.

This sequence belongs to the EF-Ts family.

It localises to the cytoplasm. In terms of biological role, associates with the EF-Tu.GDP complex and induces the exchange of GDP to GTP. It remains bound to the aminoacyl-tRNA.EF-Tu.GTP complex up to the GTP hydrolysis stage on the ribosome. In Burkholderia cenocepacia (strain HI2424), this protein is Elongation factor Ts.